A 303-amino-acid polypeptide reads, in one-letter code: Ribosomal protein uL3 glutamine methyltransferase (303 aa).

Belongs to the protein N5-glutamine methyltransferase family. PrmB subfamily.

The catalysed reaction is L-glutaminyl-[ribosomal protein uL3] + S-adenosyl-L-methionine = N(5)-methyl-L-glutaminyl-[ribosomal protein uL3] + S-adenosyl-L-homocysteine + H(+). In terms of biological role, methylates large ribosomal subunit protein uL3 on a specific glutamine residue. In Neisseria meningitidis serogroup B (strain ATCC BAA-335 / MC58), this protein is Ribosomal protein uL3 glutamine methyltransferase.